The chain runs to 284 residues: Tropomyosin alpha-1 chain (284 aa).

N-acetylmethionine is present on Met-1. Residues Met-1–Glu-40 are disordered. The stretch at Met-1–Ile-284 forms a coiled coil. The segment covering Lys-12 to Glu-40 has biased composition (basic and acidic residues).

In terms of assembly, homodimer. Heterodimer of an alpha (TPM1, TPM3 or TPM4) and a beta (TPM2) chain.

It localises to the cytoplasm. It is found in the cytoskeleton. Functionally, binds to actin filaments in muscle and non-muscle cells. Plays a central role, in association with the troponin complex, in the calcium dependent regulation of vertebrate striated muscle contraction. Smooth muscle contraction is regulated by interaction with caldesmon. In non-muscle cells is implicated in stabilizing cytoskeleton actin filaments. This Chelon auratus (Golden grey mullet) protein is Tropomyosin alpha-1 chain.